Here is a 482-residue protein sequence, read N- to C-terminus: Carbamoyl phosphate synthase large chain, N-terminal section (482 aa).

The tract at residues 1–398 (MESIKKVMVF…ALQKAIRSLD (398 aa)) is carboxyphosphate synthetic domain. Residues Arg-126, Arg-166, Gly-172, Gly-173, Glu-205, Val-207, Glu-212, Gly-238, Ile-239, His-240, Gln-281, and Glu-295 each contribute to the ATP site. The ATP-grasp domain maps to 130–324 (AEAMAEINEP…IARIAAKIAI (195 aa)). Residues Gln-281, Glu-295, and Asn-297 each coordinate Mg(2+). Positions 281, 295, and 297 each coordinate Mn(2+).

This sequence belongs to the CarB family. As to quaternary structure, composed of two chains; the small (or glutamine) chain promotes the hydrolysis of glutamine to ammonia, which is used by the large (or ammonia) chain to synthesize carbamoyl phosphate. Tetramer of heterodimers (alpha,beta)4. Requires Mg(2+) as cofactor. It depends on Mn(2+) as a cofactor.

The catalysed reaction is hydrogencarbonate + L-glutamine + 2 ATP + H2O = carbamoyl phosphate + L-glutamate + 2 ADP + phosphate + 2 H(+). The enzyme catalyses hydrogencarbonate + NH4(+) + 2 ATP = carbamoyl phosphate + 2 ADP + phosphate + 2 H(+). The protein operates within amino-acid biosynthesis; L-arginine biosynthesis; carbamoyl phosphate from bicarbonate: step 1/1. It functions in the pathway pyrimidine metabolism; UMP biosynthesis via de novo pathway; (S)-dihydroorotate from bicarbonate: step 1/3. In terms of biological role, large subunit of the glutamine-dependent carbamoyl phosphate synthetase (CPSase). CPSase catalyzes the formation of carbamoyl phosphate from the ammonia moiety of glutamine, carbonate, and phosphate donated by ATP, constituting the first step of 2 biosynthetic pathways, one leading to arginine and/or urea and the other to pyrimidine nucleotides. The large subunit (synthetase) binds the substrates ammonia (free or transferred from glutamine from the small subunit), hydrogencarbonate and ATP and carries out an ATP-coupled ligase reaction, activating hydrogencarbonate by forming carboxy phosphate which reacts with ammonia to form carbamoyl phosphate. The protein is Carbamoyl phosphate synthase large chain, N-terminal section (carB1) of Methanocaldococcus jannaschii (strain ATCC 43067 / DSM 2661 / JAL-1 / JCM 10045 / NBRC 100440) (Methanococcus jannaschii).